We begin with the raw amino-acid sequence, 746 residues long: NAD(P)H-quinone oxidoreductase subunit 5, chloroplastic (746 aa).

The next 16 helical transmembrane spans lie at 9 to 29 (WMIP…LLLF), 40 to 60 (WAFL…DLSI), 89 to 109 (IDPL…LVLI), 125 to 145 (FAYM…SNLI), 147 to 167 (VYIF…FWFT), 185 to 205 (GDFG…SFEF), 219 to 239 (NQVH…GPVA), 258 to 278 (TPIS…FLVA), 280 to 300 (LLPL…IGII), 327 to 347 (LGYM…FHLI), 354 to 374 (ALLF…VGYS), 396 to 416 (TTFL…CFWS), 425 to 445 (WLYS…TAFY), 546 to 566 (ILFP…IGIP), 607 to 627 (FSVS…KPAY), and 723 to 743 (LLLY…LNLL).

It belongs to the complex I subunit 5 family. As to quaternary structure, NDH is composed of at least 16 different subunits, 5 of which are encoded in the nucleus.

It localises to the plastid. The protein resides in the chloroplast thylakoid membrane. It catalyses the reaction a plastoquinone + NADH + (n+1) H(+)(in) = a plastoquinol + NAD(+) + n H(+)(out). The catalysed reaction is a plastoquinone + NADPH + (n+1) H(+)(in) = a plastoquinol + NADP(+) + n H(+)(out). Functionally, NDH shuttles electrons from NAD(P)H:plastoquinone, via FMN and iron-sulfur (Fe-S) centers, to quinones in the photosynthetic chain and possibly in a chloroplast respiratory chain. The immediate electron acceptor for the enzyme in this species is believed to be plastoquinone. Couples the redox reaction to proton translocation, and thus conserves the redox energy in a proton gradient. The sequence is that of NAD(P)H-quinone oxidoreductase subunit 5, chloroplastic (ndhF) from Carica papaya (Papaya).